A 170-amino-acid polypeptide reads, in one-letter code: Small ribosomal subunit protein uS3mA (170 aa).

Residues 1-30 (MAAPVMSALGRLQGLIRTERSLLTHVQSRC) constitute a mitochondrion transit peptide.

The protein belongs to the universal ribosomal protein uS3 family. As to quaternary structure, component of the mitochondrial ribosome small subunit (28S) which comprises a 12S rRNA and about 30 distinct proteins.

The protein localises to the mitochondrion. In Xenopus laevis (African clawed frog), this protein is Small ribosomal subunit protein uS3mA (mrps24-a).